Consider the following 342-residue polypeptide: Probable RNA methyltransferase PST_2231 (342 aa).

Catalysis depends on glutamate 91, which acts as the Proton acceptor. In terms of domain architecture, Radical SAM core spans 94 to 320 (LLPRDGLCVS…TKVRNSAGQD (227 aa)). The cysteines at positions 101 and 325 are disulfide-linked. Cysteine 108, cysteine 112, and cysteine 115 together coordinate [4Fe-4S] cluster. Residues 153–154 (GE), serine 183, 206–208 (SLH), and asparagine 282 contribute to the S-adenosyl-L-methionine site. Cysteine 325 functions as the S-methylcysteine intermediate in the catalytic mechanism.

The protein belongs to the radical SAM superfamily. RlmN family. [4Fe-4S] cluster serves as cofactor.

It is found in the cytoplasm. The chain is Probable RNA methyltransferase PST_2231 from Stutzerimonas stutzeri (strain A1501) (Pseudomonas stutzeri).